Consider the following 300-residue polypeptide: tRNA dimethylallyltransferase 1 (300 aa).

13 to 20 (GPTGVGKT) is an ATP binding site. 15-20 (TGVGKT) serves as a coordination point for substrate. The interaction with substrate tRNA stretch occupies residues 38–41 (DSRQ).

This sequence belongs to the IPP transferase family. In terms of assembly, monomer. It depends on Mg(2+) as a cofactor.

The enzyme catalyses adenosine(37) in tRNA + dimethylallyl diphosphate = N(6)-dimethylallyladenosine(37) in tRNA + diphosphate. Catalyzes the transfer of a dimethylallyl group onto the adenine at position 37 in tRNAs that read codons beginning with uridine, leading to the formation of N6-(dimethylallyl)adenosine (i(6)A). The polypeptide is tRNA dimethylallyltransferase 1 (Porphyromonas gingivalis (strain ATCC BAA-308 / W83)).